The chain runs to 535 residues: Succinate-semialdehyde dehydrogenase, mitochondrial (535 aa).

The transit peptide at 1-47 (MATCIWLRSCGARRLGSTFPGCRLRPRAGGLVPASGPAPGPAQLRCY) directs the protein to the mitochondrion. Position 126 is an N6-acetyllysine; alternate (lysine 126). Lysine 126 bears the N6-succinyllysine; alternate mark. Lysine 135 and lysine 184 each carry N6-succinyllysine. NAD(+) is bound by residues arginine 213 and 228 to 231 (KPAE). Residue arginine 213 coordinates substrate. Lysine 265 bears the N6-acetyllysine; alternate mark. Lysine 265 carries the post-translational modification N6-succinyllysine; alternate. NAD(+) is bound at residue 284 to 289 (GSTTTG). The Proton acceptor role is filled by glutamate 306. Residue arginine 334 participates in substrate binding. Cysteine 340 (nucleophile) is an active-site residue. A disulfide bridge connects residues cysteine 340 and cysteine 342. Lysine 365 carries the post-translational modification N6-acetyllysine. Lysine 402 is subject to N6-succinyllysine. At lysine 411 the chain carries N6-acetyllysine. Serine 498 is a binding site for substrate. A Phosphoserine modification is found at serine 499.

The protein belongs to the aldehyde dehydrogenase family. Homotetramer.

It is found in the mitochondrion. It catalyses the reaction succinate semialdehyde + NAD(+) + H2O = succinate + NADH + 2 H(+). The protein operates within amino-acid degradation; 4-aminobutanoate degradation. Redox-regulated. Inhibited under oxydizing conditions. In terms of biological role, catalyzes one step in the degradation of the inhibitory neurotransmitter gamma-aminobutyric acid (GABA). The chain is Succinate-semialdehyde dehydrogenase, mitochondrial (ALDH5A1) from Pan troglodytes (Chimpanzee).